Reading from the N-terminus, the 983-residue chain is Isoleucine--tRNA ligase (983 aa).

The 'HIGH' region motif lies at 61–71 (PYANGELHVGH). E608 is an L-isoleucyl-5'-AMP binding site. The 'KMSKS' region signature appears at 649 to 653 (KMSKS). An ATP-binding site is contributed by K652. Residues C952, C955, C972, and C975 each contribute to the Zn(2+) site.

This sequence belongs to the class-I aminoacyl-tRNA synthetase family. IleS type 1 subfamily. Monomer. It depends on Zn(2+) as a cofactor.

It is found in the cytoplasm. The catalysed reaction is tRNA(Ile) + L-isoleucine + ATP = L-isoleucyl-tRNA(Ile) + AMP + diphosphate. Functionally, catalyzes the attachment of isoleucine to tRNA(Ile). As IleRS can inadvertently accommodate and process structurally similar amino acids such as valine, to avoid such errors it has two additional distinct tRNA(Ile)-dependent editing activities. One activity is designated as 'pretransfer' editing and involves the hydrolysis of activated Val-AMP. The other activity is designated 'posttransfer' editing and involves deacylation of mischarged Val-tRNA(Ile). The protein is Isoleucine--tRNA ligase of Gloeobacter violaceus (strain ATCC 29082 / PCC 7421).